The chain runs to 307 residues: Transaldolase (307 aa).

Residue Lys125 is the Schiff-base intermediate with substrate of the active site.

It belongs to the transaldolase family. Type 1 subfamily. Homodimer.

It localises to the cytoplasm. It catalyses the reaction D-sedoheptulose 7-phosphate + D-glyceraldehyde 3-phosphate = D-erythrose 4-phosphate + beta-D-fructose 6-phosphate. Its pathway is carbohydrate degradation; pentose phosphate pathway; D-glyceraldehyde 3-phosphate and beta-D-fructose 6-phosphate from D-ribose 5-phosphate and D-xylulose 5-phosphate (non-oxidative stage): step 2/3. Transaldolase is important for the balance of metabolites in the pentose-phosphate pathway. The sequence is that of Transaldolase from Pseudomonas paraeruginosa (strain DSM 24068 / PA7) (Pseudomonas aeruginosa (strain PA7)).